Here is a 161-residue protein sequence, read N- to C-terminus: Immunity protein YezG (161 aa).

As to quaternary structure, monomer. Interacts with the C-terminus of cognate toxin YeeF, probably with 2:2 stoichiometry. The second YezG molecules binds with lower affinity.

The protein resides in the cytoplasm. Its function is as follows. Immunity component of an LXG toxin-immunity module. These modules promote kin selection, mediate competition in biofilms, and drive spatial segregation of different strains, indicating that LXG toxins may help avoid warfare between strains in biofilms. Neutralizes the toxic abilities of cognate toxin YeeF upon expression in E.coli and in vitro. This is Immunity protein YezG from Bacillus spizizenii (strain ATCC 23059 / NRRL B-14472 / W23) (Bacillus subtilis subsp. spizizenii).